The chain runs to 467 residues: MYGNYPHFIKFPAGFGNSPVHASSTSVSPSSSLSVGSTVDGHHNYLEAPTNASRALPSPMNTIGSPVNALGSPYRVIASSIGSHPVALSSSAPGMNFVTHSPQPNVLNNVSSSEDIKPLPGLPGIGNMNYPSTSPGSLAKHICAICGDRSSGKHYGVYSCEGCKGFFKRTIRKDLIYTCRDNKDCLIDKRQRNRCQYCRYQKCLAMGMKREAVQEERQGSRERSENEAESTSGGSEDMPVERILEAELAVEPKTEAYSDVNTESSTNDPVTNICHAADKQLFTLVEWAKRIPHFSDLTLEDQVILLRAGWNELLIASFSHRSVSVQDGILLATGLHVHRSSAHSAGVGSIFDRVLTELVSKMKDMQMDKSELGCLRAIVLFNPDAKGLSSPSEVESLREKVYATLEAYTKQKYPEQPGRFAKLLLRLPALRSIGLKCLEHLFFFKLIGDTPIDTFLMEMLETPLQVT.

Residues 1-142 (MYGNYPHFIK…TSPGSLAKHI (142 aa)) form a modulating region. NR C4-type zinc fingers lie at residues 143–163 (CAICGDRSSGKHYGVYSCEGC) and 179–203 (CRDNKDCLIDKRQRNRCQYCRYQKC). Residues 143–208 (CAICGDRSSG…RYQKCLAMGM (66 aa)) constitute a DNA-binding region (nuclear receptor). The interval 209–232 (KREAVQEERQGSRERSENEAESTS) is hinge. Over residues 214–226 (QEERQGSRERSEN) the composition is skewed to basic and acidic residues. The disordered stretch occupies residues 214 to 237 (QEERQGSRERSENEAESTSGGSED). The NR LBD domain maps to 235-463 (SEDMPVERIL…TFLMEMLETP (229 aa)).

Belongs to the nuclear hormone receptor family. NR2 subfamily. In terms of assembly, homodimer. Heterodimer; with a RAR molecule. Binds DNA preferentially as a RAR/RXR heterodimer. As to expression, isoform 1 is highly expressed inliver. Isoform 2 is abundantly expressed in eye and dorsal root ganglia.

The protein localises to the nucleus. Its function is as follows. Receptor for retinoic acid. Retinoic acid receptors bind as heterodimers to their target response elements in response to their ligands, all-trans or 9-cis retinoic acid, and regulate gene expression in various biological processes. The RAR/RXR heterodimers bind to the retinoic acid response elements (RARE) composed of tandem 5'-AGGTCA-3' sites known as DR1-DR5. The high affinity ligand for RXRs is 9-cis retinoic acid. This Gallus gallus (Chicken) protein is Retinoic acid receptor RXR-gamma (RXRG).